A 446-amino-acid chain; its full sequence is Neuropeptide Y receptor type 5 (446 aa).

The Extracellular segment spans residues 1 to 42 (MDLELQDFYNKTLATENNTAATRNSDFPVWDDYKSSVDDLQY). Residues Asn-10 and Asn-17 are each glycosylated (N-linked (GlcNAc...) asparagine). Residues 43 to 63 (FLIGLYTFVSLLGFMGNLLIL) form a helical membrane-spanning segment. The Cytoplasmic portion of the chain corresponds to 64–77 (MALMRKRNQKTMVN). Residues 78-98 (FLIGNLAFSDILVVLFCSPFT) traverse the membrane as a helical segment. At 99–117 (LTSVLLDQWMFGKVMCHIM) the chain is on the extracellular side. Cys-114 and Cys-198 form a disulfide bridge. Residues 118–138 (PFLQCVSVLVSTLILISIAIV) form a helical membrane-spanning segment. At 139-156 (RYHMIKHPISNNLTANHG) the chain is on the cytoplasmic side. Residues 157 to 177 (YFLIATVWTLGFAICSPLPVF) form a helical membrane-spanning segment. The Extracellular segment spans residues 178–208 (HSLVELQETFDSALLSSRYLCVESWPSDSYR). A helical transmembrane segment spans residues 209 to 229 (IAFTISLLLVQYILPLVCLTV). The Cytoplasmic portion of the chain corresponds to 230–369 (SHTSVCRSIS…KKRSRSVFYR (140 aa)). The chain crosses the membrane as a helical span at residues 370-390 (LTILILVFAVSWMPLHLFHVV). Topologically, residues 391-407 (TDFNDNLISNRHFKLVY) are extracellular. A helical transmembrane segment spans residues 408–428 (CICHLLGMMSCCLNPILYGFL). Over 429–446 (NNGIKADLISLIQCLHMS) the chain is Cytoplasmic. A lipid anchor (S-palmitoyl cysteine) is attached at Cys-442.

It belongs to the G-protein coupled receptor 1 family.

The protein localises to the cell membrane. In terms of biological role, receptor for neuropeptide Y and peptide YY. The activity of this receptor is mediated by G proteins that inhibit adenylate cyclase activity. Seems to be associated with food intake. Could be involved in feeding disorders. The sequence is that of Neuropeptide Y receptor type 5 (NPY5R) from Canis lupus familiaris (Dog).